Consider the following 324-residue polypeptide: Fructose-1,6-bisphosphatase class 1 (324 aa).

Glu-88, Asp-107, Leu-109, and Asp-110 together coordinate Mg(2+). Substrate-binding positions include 110–113 (DGSS), Asn-199, and Lys-265. A Mg(2+)-binding site is contributed by Glu-271.

The protein belongs to the FBPase class 1 family. Homotetramer. The cofactor is Mg(2+).

The protein localises to the cytoplasm. The catalysed reaction is beta-D-fructose 1,6-bisphosphate + H2O = beta-D-fructose 6-phosphate + phosphate. The protein operates within carbohydrate biosynthesis; gluconeogenesis. The polypeptide is Fructose-1,6-bisphosphatase class 1 (Neisseria meningitidis serogroup C (strain 053442)).